The following is a 227-amino-acid chain: Phosphoribosylformylglycinamidine synthase subunit PurQ (227 aa).

One can recognise a Glutamine amidotransferase type-1 domain in the interval 3–225 (FAVIVFPGSN…LKQWRETYVV (223 aa)). Cys86 serves as the catalytic Nucleophile. Catalysis depends on residues His194 and Glu196.

In terms of assembly, part of the FGAM synthase complex composed of 1 PurL, 1 PurQ and 2 PurS subunits.

It is found in the cytoplasm. It catalyses the reaction N(2)-formyl-N(1)-(5-phospho-beta-D-ribosyl)glycinamide + L-glutamine + ATP + H2O = 2-formamido-N(1)-(5-O-phospho-beta-D-ribosyl)acetamidine + L-glutamate + ADP + phosphate + H(+). It carries out the reaction L-glutamine + H2O = L-glutamate + NH4(+). It participates in purine metabolism; IMP biosynthesis via de novo pathway; 5-amino-1-(5-phospho-D-ribosyl)imidazole from N(2)-formyl-N(1)-(5-phospho-D-ribosyl)glycinamide: step 1/2. In terms of biological role, part of the phosphoribosylformylglycinamidine synthase complex involved in the purines biosynthetic pathway. Catalyzes the ATP-dependent conversion of formylglycinamide ribonucleotide (FGAR) and glutamine to yield formylglycinamidine ribonucleotide (FGAM) and glutamate. The FGAM synthase complex is composed of three subunits. PurQ produces an ammonia molecule by converting glutamine to glutamate. PurL transfers the ammonia molecule to FGAR to form FGAM in an ATP-dependent manner. PurS interacts with PurQ and PurL and is thought to assist in the transfer of the ammonia molecule from PurQ to PurL. The polypeptide is Phosphoribosylformylglycinamidine synthase subunit PurQ (Bacillus cereus (strain Q1)).